The sequence spans 202 residues: MKALTARQQEVFDLIRDHISQTGMPPTRAEIAQRLGFRSPNAAEEHLKALARKGVIEIVSGASRGIRLLLDEEEGLPLVGRVAAGEPLLAQQHIEGHYQVDPSLFKPNADFLLRVSGMSMKDIGIMDGDLLAVHKTQDVRNGQVVVARIDDEVTVKRLKKQGNKVELLPENSEFKPIVVDLREQSFTIEGLAVGVIRNGEWL.

A DNA-binding region (H-T-H motif) is located at residues 28 to 48; that stretch reads RAEIAQRLGFRSPNAAEEHLK. Active-site for autocatalytic cleavage activity residues include S119 and K156.

Belongs to the peptidase S24 family. In terms of assembly, homodimer.

It carries out the reaction Hydrolysis of Ala-|-Gly bond in repressor LexA.. Its function is as follows. Represses a number of genes involved in the response to DNA damage (SOS response), including recA and lexA. Binds to the 16 bp palindromic sequence 5'-CTGTATATATATACAG-3'. In the presence of single-stranded DNA, RecA interacts with LexA causing an autocatalytic cleavage which disrupts the DNA-binding part of LexA, leading to derepression of the SOS regulon and eventually DNA repair. The sequence is that of LexA repressor from Citrobacter koseri (strain ATCC BAA-895 / CDC 4225-83 / SGSC4696).